Reading from the N-terminus, the 226-residue chain is Large ribosomal subunit protein uL1 (226 aa).

This sequence belongs to the universal ribosomal protein uL1 family. Part of the 50S ribosomal subunit.

Binds directly to 23S rRNA. The L1 stalk is quite mobile in the ribosome, and is involved in E site tRNA release. In terms of biological role, protein L1 is also a translational repressor protein, it controls the translation of the L11 operon by binding to its mRNA. The chain is Large ribosomal subunit protein uL1 from Mycoplasmoides gallisepticum (strain R(low / passage 15 / clone 2)) (Mycoplasma gallisepticum).